A 1868-amino-acid chain; its full sequence is Protein TIC 214 (1868 aa).

A run of 6 helical transmembrane segments spans residues 11-31, 64-84, 87-107, 126-146, 166-186, and 221-241; these read LLLL…YYGF, FIMG…HLAL, PHTL…FFWN, LSIQ…HFIL, ILFV…LMKS, and IFSI…PSPI. Residues 248–276 are compositionally biased toward basic and acidic residues; sequence ESSKGEEKKKTEKERDVEMETISKTKKIE. Disordered stretches follow at residues 248–277, 617–643, 658–700, 782–806, and 1537–1607; these read ESSK…KIEQ, FDFE…GIRS, DEDT…QAEE, TSDY…KRKE, and YIDP…RKKK. The segment covering 617 to 636 has biased composition (acidic residues); that stretch reads FDFEEEEEEEEEEDDEEEPT. A compositionally biased stretch (polar residues) spans 674–683; sequence AKNSDQAKNS. Composition is skewed to basic and acidic residues over residues 684–700, 789–806, and 1537–1576; these read DQAK…QAEE, GAKE…KRKE, and YIDP…ERQH.

The protein belongs to the TIC214 family. In terms of assembly, part of the Tic complex.

It is found in the plastid. Its subcellular location is the chloroplast inner membrane. In terms of biological role, involved in protein precursor import into chloroplasts. May be part of an intermediate translocation complex acting as a protein-conducting channel at the inner envelope. This is Protein TIC 214 from Nuphar advena (Common spatterdock).